We begin with the raw amino-acid sequence, 179 residues long: Alpha-S2-casein-like A (179 aa).

An N-terminal signal peptide occupies residues 1–15 (MKFFIFTCLVAAALA). A phosphoserine mark is found at S24 and S25. Residues 44–121 (FQTPQDSASS…NAIYDVPSQE (78 aa)) form a disordered region. Basic and acidic residues predominate over residues 63 to 74 (ISEKIEQSEEQK). Polar residues predominate over residues 93–110 (PQICTPYQQQSSVNQRPQ).

This sequence belongs to the alpha-casein family. In terms of tissue distribution, mammary gland specific. Secreted in milk.

It is found in the secreted. Functionally, important role in the capacity of milk to transport calcium phosphate. The protein is Alpha-S2-casein-like A (Csn1s2a) of Rattus norvegicus (Rat).